The sequence spans 154 residues: Large ribosomal subunit protein uL15 (154 aa).

The span at methionine 1–arginine 13 shows a compositional bias: basic and acidic residues. The tract at residues methionine 1–glycine 52 is disordered.

The protein belongs to the universal ribosomal protein uL15 family. In terms of assembly, part of the 50S ribosomal subunit.

In terms of biological role, binds to the 23S rRNA. This Deinococcus deserti (strain DSM 17065 / CIP 109153 / LMG 22923 / VCD115) protein is Large ribosomal subunit protein uL15.